Reading from the N-terminus, the 857-residue chain is Autoinducer 2 sensor kinase/phosphatase LuxQ (857 aa).

2 helical membrane-spanning segments follow: residues 14-34 (IASFITHAVVVVMGVLIVSVL) and 283-303 (FWMAFALISMIGVSIASRWWL). In terms of domain architecture, Histidine kinase spans 486–706 (KMSHELRTPL…RFEIQLPIEL (221 aa)). His489 carries the post-translational modification Phosphohistidine; by autocatalysis. A Response regulatory domain is found at 731-846 (RVLLVEDNHT…TLHKALEHFK (116 aa)). Asp780 carries the 4-aspartylphosphate modification.

As to quaternary structure, binds the complex formed by AI-2 and LuxP.

It is found in the cell inner membrane. It carries out the reaction ATP + protein L-histidine = ADP + protein N-phospho-L-histidine.. Functionally, at low cell density, in absence of AI-2 (autoinducer 2), LuxQ has a kinase activity and autophosphorylates on a histidine residue. The phosphoryl group is then transferred to an aspartate residue in the response regulator domain. The phosphoryl group is transferred to LuxU, and ultimately to LuxO. At high cell density, in the presence of AI-2, the kinase activity is inactivated, and the response regulator domain has a phosphatase activity. In Vibrio cholerae serotype O1 (strain ATCC 39315 / El Tor Inaba N16961), this protein is Autoinducer 2 sensor kinase/phosphatase LuxQ (luxQ).